The chain runs to 523 residues: Cytochrome b5 reductase 4 (523 aa).

A Cytochrome b5 heme-binding domain is found at 54–130 (LIDVTEEELA…LKECLIGRMA (77 aa)). Heme is bound by residues His-89 and His-112. In terms of domain architecture, CS spans 167–258 (ESHPWYDWFQ…KEPVSWKSLG (92 aa)). Residues 275 to 387 (LYYRKCRLAS…SNPQGTFSSF (113 aa)) enclose the FAD-binding FR-type domain. Residues 367–382 (ENLT…NPQG) and 394–426 (DVFL…KAKL) each bind FAD.

Belongs to the flavoprotein pyridine nucleotide cytochrome reductase family. It depends on FAD as a cofactor.

It is found in the endoplasmic reticulum. It catalyses the reaction 2 Fe(III)-[cytochrome b5] + NADH = 2 Fe(II)-[cytochrome b5] + NAD(+) + H(+). Functionally, NADH-cytochrome b5 reductase involved in endoplasmic reticulum stress response pathway. The protein is Cytochrome b5 reductase 4 (cyb5r4) of Xenopus tropicalis (Western clawed frog).